A 474-amino-acid chain; its full sequence is Putative response regulator NtrX-like (474 aa).

The region spanning 5-121 (DVLIVDDEES…KLVILLTRAC (117 aa)) is the Response regulatory domain. Aspartate 54 bears the 4-aspartylphosphate mark. Residues 143 to 368 (LVGECSVTLK…LRNVVEWTLI (226 aa)) enclose the Sigma-54 factor interaction domain. ATP-binding positions include 171–178 (GKVGSGKE) and 231–240 (ANNGTLYIDE).

Member of the two-component regulatory system RC0849/RC0948. The chain is Putative response regulator NtrX-like from Rickettsia conorii (strain ATCC VR-613 / Malish 7).